A 455-amino-acid chain; its full sequence is 12S seed storage protein CRB (455 aa).

The signal sequence occupies residues 1-24 (MGRVSSIISFSLTLLILFNGYTAQ). 2 disulfide bridges follow: C30–C63 and C106–C276. Cupin type-1 domains are found at residues 35–229 (LNAL…ETAQ) and 282–431 (ENLD…EEAK). T109 carries the post-translational modification Phosphothreonine. At Y299 the chain carries Phosphotyrosine. 2 positions are modified to phosphoserine: S301 and S367. Residues T395 and T420 each carry the phosphothreonine modification. S436 is modified (phosphoserine).

This sequence belongs to the 11S seed storage protein (globulins) family. In terms of assembly, hexamer; each subunit is composed of an acidic and a basic chain derived from a single precursor and linked by a disulfide bond. In terms of processing, ubiquitinated. Post-translationally, proteolytically processed during seed maturation at a conserved Asn-Gly peptide bond by an asparaginyl endopeptidase to produce two mature polypeptides referred to as alpha and beta subunits that are joined together by a disulfide bond. Phosphorylated in seeds on some Tyr residues in response to abscisic acid (ABA). As to expression, accumulates in seeds 8 days after anthesis.

The protein localises to the protein storage vacuole. Its function is as follows. Seed storage protein. The protein is 12S seed storage protein CRB (CRB) of Arabidopsis thaliana (Mouse-ear cress).